The primary structure comprises 96 residues: Prokineticin Bv8 (96 aa).

The N-terminal stretch at 1-19 is a signal peptide; the sequence is MKCFAQIVVLLLVIAFSHG. Residues 20 to 24 are may be important for binding to prokineticin receptor 2; that stretch reads AVITG. 5 disulfide bridges follow: cysteine 26/cysteine 38, cysteine 32/cysteine 50, cysteine 37/cysteine 78, cysteine 60/cysteine 86, and cysteine 80/cysteine 95.

Expressed by the skin glands.

The protein localises to the secreted. Potent agonist for both PKR1/PROKR1 and PKR2/PROKR2, and inducer of a potent and long-lasting hyperalgesia. Shows an EC(50) of 0.264 nM, when tested on neuroblastoma cells (SH-SY5Y) which endogenously express mainly PKR2/PROKR2. Also potentiates capsaicin-induced TRPV1 current, when tested on DRG neurons. Induces a biphasic hyperalgesia to tactile and thermal stimuli after systemic injection of this protein into rat. The initial phase of hyperalgesia is caused by a local action on nociceptors, because intraplantar injection of this protein causes a strong and localized hyperalgesia with a similar time course to that of the initial phase of hyperalgesia seen with systemic injection. The secondary phase of hyperalgesia is not seen with local intraplantar injection and is therefore probably attributable to a central action of this protein. At subnanomolar concentrations, this protein both induces potent chemotaxis of macrophages and stimulates LPS-induced production of the pro-inflammatory cytokines IL-1 and IL-12. In vivo, this protein potently stimulates the contraction of the guinea-pig gastrointestinal (GI) smooth muscle (at nanomolar concentration). The polypeptide is Prokineticin Bv8 (Bombina variegata (Yellow-bellied toad)).